The primary structure comprises 287 residues: Oxaloacetate decarboxylase (287 aa).

S50 lines the substrate pocket. D88 is a Mg(2+) binding site. 2 residues coordinate substrate: R159 and H235.

This sequence belongs to the isocitrate lyase/PEP mutase superfamily. Oxaloacetate decarboxylase family. In terms of assembly, homotetramer; dimer of dimers. Mg(2+) is required as a cofactor.

It carries out the reaction oxaloacetate + H(+) = pyruvate + CO2. Catalyzes the decarboxylation of oxaloacetate into pyruvate. Seems to play a role in maintaining cellular concentrations of bicarbonate and pyruvate. This is Oxaloacetate decarboxylase from Marinomonas sp. (strain MWYL1).